Consider the following 318-residue polypeptide: Biotin synthase (318 aa).

The Radical SAM core domain occupies 46 to 272 (DGVDVEQLNN…RSVVKISGGR (227 aa)). [4Fe-4S] cluster-binding residues include cysteine 61, cysteine 65, and cysteine 68. [2Fe-2S] cluster is bound by residues cysteine 105, cysteine 138, cysteine 197, and lysine 267.

The protein belongs to the radical SAM superfamily. Biotin synthase family. In terms of assembly, homodimer. Requires [4Fe-4S] cluster as cofactor. [2Fe-2S] cluster is required as a cofactor.

The catalysed reaction is (4R,5S)-dethiobiotin + (sulfur carrier)-SH + 2 reduced [2Fe-2S]-[ferredoxin] + 2 S-adenosyl-L-methionine = (sulfur carrier)-H + biotin + 2 5'-deoxyadenosine + 2 L-methionine + 2 oxidized [2Fe-2S]-[ferredoxin]. It participates in cofactor biosynthesis; biotin biosynthesis; biotin from 7,8-diaminononanoate: step 2/2. Catalyzes the conversion of dethiobiotin (DTB) to biotin by the insertion of a sulfur atom into dethiobiotin via a radical-based mechanism. This Cenarchaeum symbiosum (strain A) protein is Biotin synthase.